Consider the following 579-residue polypeptide: Arginine--tRNA ligase (579 aa).

The short motif at 128–138 (PNLAKEMHVGH) is the 'HIGH' region element.

Belongs to the class-I aminoacyl-tRNA synthetase family. As to quaternary structure, monomer.

The protein resides in the cytoplasm. It carries out the reaction tRNA(Arg) + L-arginine + ATP = L-arginyl-tRNA(Arg) + AMP + diphosphate. This Pseudomonas syringae pv. syringae (strain B728a) protein is Arginine--tRNA ligase.